The sequence spans 111 residues: Large ribosomal subunit protein P2-2 (111 aa).

The tract at residues 86-111 (APAAAAAKKDEPEEEADDDMGFGLFD) is disordered.

This sequence belongs to the eukaryotic ribosomal protein P1/P2 family. P1 and P2 exist as dimers at the large ribosomal subunit. In terms of processing, phosphorylated.

Functionally, plays an important role in the elongation step of protein synthesis. This is Large ribosomal subunit protein P2-2 (LIP') from Leishmania infantum.